The following is a 277-amino-acid chain: F420-dependent methylenetetrahydromethanopterin dehydrogenase (277 aa).

It belongs to the MTD family.

It carries out the reaction 5,10-methylenetetrahydromethanopterin + oxidized coenzyme F420-(gamma-L-Glu)(n) + 2 H(+) = 5,10-methenyl-5,6,7,8-tetrahydromethanopterin + reduced coenzyme F420-(gamma-L-Glu)(n). Its pathway is one-carbon metabolism; methanogenesis from CO(2); 5,10-methylene-5,6,7,8-tetrahydromethanopterin from 5,10-methenyl-5,6,7,8-tetrahydromethanopterin (coenzyme F420 route): step 1/1. Catalyzes the reversible reduction of methenyl-H(4)MPT(+) to methylene-H(4)MPT. The polypeptide is F420-dependent methylenetetrahydromethanopterin dehydrogenase (Methanococcus maripaludis (strain DSM 14266 / JCM 13030 / NBRC 101832 / S2 / LL)).